The following is a 568-amino-acid chain: Glycine--tRNA ligase (568 aa).

Substrate-binding residues include Arg-97 and Glu-163. Residues 195–197, 205–210, 322–323, and 441–444 each bind ATP; these read RNE, IRLREF, EC, and GIDR. 210–214 contacts substrate; that stretch reads FTQAE. 437–441 contributes to the substrate binding site; it reads EPSFG.

The protein belongs to the class-II aminoacyl-tRNA synthetase family.

The protein localises to the cytoplasm. The enzyme catalyses tRNA(Gly) + glycine + ATP = glycyl-tRNA(Gly) + AMP + diphosphate. Its function is as follows. Catalyzes the attachment of glycine to tRNA(Gly). This is Glycine--tRNA ligase from Pyrococcus furiosus (strain ATCC 43587 / DSM 3638 / JCM 8422 / Vc1).